Consider the following 157-residue polypeptide: Peptide methionine sulfoxide reductase MsrA (157 aa).

C10 is a catalytic residue.

Belongs to the MsrA Met sulfoxide reductase family.

It carries out the reaction L-methionyl-[protein] + [thioredoxin]-disulfide + H2O = L-methionyl-(S)-S-oxide-[protein] + [thioredoxin]-dithiol. The catalysed reaction is [thioredoxin]-disulfide + L-methionine + H2O = L-methionine (S)-S-oxide + [thioredoxin]-dithiol. Functionally, has an important function as a repair enzyme for proteins that have been inactivated by oxidation. Catalyzes the reversible oxidation-reduction of methionine sulfoxide in proteins to methionine. This chain is Peptide methionine sulfoxide reductase MsrA, found in Clostridium botulinum (strain Loch Maree / Type A3).